The sequence spans 44 residues: Photosystem I reaction center subunit IX (44 aa).

Residues 7–27 traverse the membrane as a helical segment; it reads YLSTAPVLATLWFGSLAGLLI.

Belongs to the PsaJ family.

It localises to the plastid. It is found in the chloroplast thylakoid membrane. Its function is as follows. May help in the organization of the PsaE and PsaF subunits. This Calycanthus floridus var. glaucus (Eastern sweetshrub) protein is Photosystem I reaction center subunit IX.